A 396-amino-acid polypeptide reads, in one-letter code: Chorismate synthase (396 aa).

Residues Arg-41 and Arg-47 each contribute to the NADP(+) site. Residues 130-132, Gly-298, 313-317, and Arg-339 each bind FMN; these read RAS and KPIPT.

Belongs to the chorismate synthase family. In terms of assembly, homotetramer. FMNH2 is required as a cofactor.

The enzyme catalyses 5-O-(1-carboxyvinyl)-3-phosphoshikimate = chorismate + phosphate. Its pathway is metabolic intermediate biosynthesis; chorismate biosynthesis; chorismate from D-erythrose 4-phosphate and phosphoenolpyruvate: step 7/7. Functionally, catalyzes the anti-1,4-elimination of the C-3 phosphate and the C-6 proR hydrogen from 5-enolpyruvylshikimate-3-phosphate (EPSP) to yield chorismate, which is the branch point compound that serves as the starting substrate for the three terminal pathways of aromatic amino acid biosynthesis. This reaction introduces a second double bond into the aromatic ring system. This is Chorismate synthase from Syntrophomonas wolfei subsp. wolfei (strain DSM 2245B / Goettingen).